Consider the following 126-residue polypeptide: Fluoride-specific ion channel FluC (126 aa).

The next 4 helical transmembrane spans lie at 5 to 25, 39 to 59, 69 to 89, and 103 to 123; these read FILA…LVGI, TLFI…LFAV, IFLV…SLDT, and AYMI…IQIV. 2 residues coordinate Na(+): Gly77 and Thr80.

Belongs to the fluoride channel Fluc/FEX (TC 1.A.43) family.

It is found in the cell inner membrane. The enzyme catalyses fluoride(in) = fluoride(out). Na(+) is not transported, but it plays an essential structural role and its presence is essential for fluoride channel function. Functionally, fluoride-specific ion channel. Important for reducing fluoride concentration in the cell, thus reducing its toxicity. In Nitrobacter winogradskyi (strain ATCC 25391 / DSM 10237 / CIP 104748 / NCIMB 11846 / Nb-255), this protein is Fluoride-specific ion channel FluC.